Consider the following 104-residue polypeptide: Protein MHF2 homolog (104 aa).

This sequence belongs to the CENP-X/MHF2 family.

The protein localises to the nucleus. Its function is as follows. Acts in the same pathway as FANCM to restrain class II meiotic crossing over (CO), and acts with FANCM during meiosis to repair interstrand cross-links (ICLs). The protein is Protein MHF2 homolog of Arabidopsis thaliana (Mouse-ear cress).